A 396-amino-acid polypeptide reads, in one-letter code: MAKAKFERTKPHVNIGTIGHVDHGKTTTTAAITKVLADAFPDLNEASAFDQIDKAPEEKARGITINISHVEYQTEKRHYAHVDAPGHADYIKNMITGAAQMDGAILVVAATDGPMPQTREHVLLARQVGVPYILVALNKADMVDDDEILELVEMEVRELLAAQEFDEEAPVIPISALKALEGDPKWTQSILDLMAAVDESIPDPVRETDKPFLMPVEDVFTITGRGTVVTGRIERGSVNVNEEVEIVGIKETSTKTTVTGIEMFRKLLDSGQAGDNVGLLVRGIKREDVERGQVVVKPGTTTPHTEFEGQAYILSKDEGGRHTPFFNNYRPQFYFRTTDVTGVVTLPEGTEMVMPGDNTEMSVKLIQPVAMDEGLRFAIREGGRTVGAGKVAKIIK.

Residues 10-205 form the tr-type G domain; that stretch reads KPHVNIGTIG…AVDESIPDPV (196 aa). The G1 stretch occupies residues 19–26; the sequence is GHVDHGKT. 19–26 is a binding site for GTP; the sequence is GHVDHGKT. Position 26 (Thr-26) interacts with Mg(2+). The tract at residues 62–66 is G2; sequence GITIN. Residues 83–86 are G3; it reads DAPG. GTP-binding positions include 83–87 and 138–141; these read DAPGH and NKAD. The tract at residues 138–141 is G4; that stretch reads NKAD. A G5 region spans residues 175 to 177; that stretch reads SAL.

It belongs to the TRAFAC class translation factor GTPase superfamily. Classic translation factor GTPase family. EF-Tu/EF-1A subfamily. Monomer.

It localises to the cytoplasm. The enzyme catalyses GTP + H2O = GDP + phosphate + H(+). GTP hydrolase that promotes the GTP-dependent binding of aminoacyl-tRNA to the A-site of ribosomes during protein biosynthesis. The chain is Elongation factor Tu from Rhodococcus erythropolis (strain PR4 / NBRC 100887).